A 161-amino-acid polypeptide reads, in one-letter code: Phosphopantetheine adenylyltransferase (161 aa).

Threonine 10 is a binding site for substrate. Residues 10–11 (TF) and histidine 18 each bind ATP. Residues lysine 42, methionine 74, and arginine 88 each coordinate substrate. ATP is bound by residues 89–91 (GVR), glutamate 99, and 124–130 (LSFVSSS).

The protein belongs to the bacterial CoaD family. As to quaternary structure, homohexamer. It depends on Mg(2+) as a cofactor.

The protein resides in the cytoplasm. The catalysed reaction is (R)-4'-phosphopantetheine + ATP + H(+) = 3'-dephospho-CoA + diphosphate. It functions in the pathway cofactor biosynthesis; coenzyme A biosynthesis; CoA from (R)-pantothenate: step 4/5. Its function is as follows. Reversibly transfers an adenylyl group from ATP to 4'-phosphopantetheine, yielding dephospho-CoA (dPCoA) and pyrophosphate. The polypeptide is Phosphopantetheine adenylyltransferase (Proteus mirabilis (strain HI4320)).